The sequence spans 151 residues: Regulatory protein RecX (151 aa).

It belongs to the RecX family.

The protein resides in the cytoplasm. In terms of biological role, modulates RecA activity. This Actinobacillus pleuropneumoniae serotype 5b (strain L20) protein is Regulatory protein RecX.